Consider the following 149-residue polypeptide: Putative pre-16S rRNA nuclease (149 aa).

The protein belongs to the YqgF nuclease family.

The protein resides in the cytoplasm. Its function is as follows. Could be a nuclease involved in processing of the 5'-end of pre-16S rRNA. The sequence is that of Putative pre-16S rRNA nuclease from Burkholderia vietnamiensis (strain G4 / LMG 22486) (Burkholderia cepacia (strain R1808)).